A 220-amino-acid chain; its full sequence is NAD(P)H-quinone oxidoreductase subunit M, chloroplastic (220 aa).

The N-terminal 37 residues, M1 to R37, are a transit peptide targeting the chloroplast. Residues L20–N91 are disordered. Over residues P34 to Q44 the composition is skewed to low complexity.

The protein belongs to the NDH complex subunit M family. In terms of assembly, part of the chloroplast NDH complex, composed of a mixture of chloroplast and nucleus encoded subunits. Component of the NDH subcomplex A, at least composed of ndhH, ndhI, ndhJ, ndhK, ndhL, ndhM, ndhN and ndhO.

Its subcellular location is the plastid. It is found in the chloroplast thylakoid membrane. It carries out the reaction a plastoquinone + NADH + (n+1) H(+)(in) = a plastoquinol + NAD(+) + n H(+)(out). It catalyses the reaction a plastoquinone + NADPH + (n+1) H(+)(in) = a plastoquinol + NADP(+) + n H(+)(out). In terms of biological role, NDH shuttles electrons from NAD(P)H:plastoquinone, via FMN and iron-sulfur (Fe-S) centers, to quinones in the photosynthetic chain and possibly in a chloroplast respiratory chain. The immediate electron acceptor for the enzyme in this species is believed to be plastoquinone. Couples the redox reaction to proton translocation, and thus conserves the redox energy in a proton gradient. The sequence is that of NAD(P)H-quinone oxidoreductase subunit M, chloroplastic from Oryza sativa subsp. indica (Rice).